A 404-amino-acid polypeptide reads, in one-letter code: Serine/threonine-protein kinase UCN (404 aa).

A Protein kinase domain is found at 22 to 340 (LKVLKLLGKG…AAEIKEHAFF (319 aa)). Residues 28-36 (LGKGATGTV) and Lys-55 contribute to the ATP site. The active-site Proton acceptor is Asp-153. A disordered region spans residues 185 to 207 (EFYHLSDPEPDPNPESNLSHNKK). The AGC-kinase C-terminal domain maps to 341–404 (KGVRWELLTE…CSENNPFVDF (64 aa)).

It belongs to the protein kinase superfamily. AGC Ser/Thr protein kinase family. In terms of tissue distribution, expressed in the epidermis and cortex of the transition zone of the root apex and developing flowers. Expressed in rosette leaves, stems and siliques.

It localises to the cytoplasm. The protein localises to the nucleus. It catalyses the reaction L-seryl-[protein] + ATP = O-phospho-L-seryl-[protein] + ADP + H(+). It carries out the reaction L-threonyl-[protein] + ATP = O-phospho-L-threonyl-[protein] + ADP + H(+). Its function is as follows. Regulates planar ovule integument development by suppressing aberrantly oriented growth. Maintains planar growth of integuments by repressing the developmental regulator and transcription factor KAN4 which is involved in the control of early integument growth and polarity. Restricts growth in stamen filaments, petals, and cotyledons. This is Serine/threonine-protein kinase UCN from Arabidopsis thaliana (Mouse-ear cress).